Reading from the N-terminus, the 342-residue chain is Autoinducer 2 import system permease protein LsrC (342 aa).

Residues 1-13 lie on the Periplasmic side of the membrane; the sequence is MLKFIQNNREITA. The chain crosses the membrane as a helical span at residues 14–34; the sequence is LLAVLLLFVLPGFLDRQYLSV. Topologically, residues 35 to 38 are cytoplasmic; it reads QTLT. A helical transmembrane segment spans residues 39–59; the sequence is MVYSSAQILILLAMGATLVML. Over 60-69 the chain is Periplasmic; it reads TRNIDVSVGS. The chain crosses the membrane as a helical span at residues 70–90; that stretch reads ITGMCAVLLGMLLNAGYSLPV. At 91-92 the chain is on the cytoplasmic side; sequence AC. A helical membrane pass occupies residues 93–113; the sequence is VATLLLGLLAGFFNGVLVAWL. K114 is a topological domain (periplasmic). Residues 115–135 traverse the membrane as a helical segment; it reads IPAIVATLGTLGLYRGIMLLW. Residues 136 to 154 are Cytoplasmic-facing; the sequence is TGGKWIEGLPAELKQLSAP. Residues 155-175 form a helical membrane-spanning segment; sequence LLLGVSAIGWLTIILVAFMAW. The Periplasmic portion of the chain corresponds to 176–212; the sequence is LLAKTAFGRSFYATGDNLQGARQLGVRTEAIRIVAFS. Residues 213–233 form a helical membrane-spanning segment; that stretch reads LNGCMAALAGIVFASQIGFIP. Residues 234–251 are Cytoplasmic-facing; the sequence is NQTGTGLEMKAIAACVLG. The helical transmembrane segment at 252 to 272 threads the bilayer; the sequence is GISLLGGSGAIIGAVLGAWFL. Over 273–283 the chain is Periplasmic; that stretch reads TQIDSVLVLLR. A helical membrane pass occupies residues 284 to 304; that stretch reads IPAWWNDFIAGLVLLAVLVFD. The Cytoplasmic portion of the chain corresponds to 305 to 342; it reads GRLRCALELNLRRQKYARFMTPPPSVKPASSGKKREAA.

It belongs to the binding-protein-dependent transport system permease family. AraH/RbsC subfamily. The complex is composed of two ATP-binding proteins (LsrA), two transmembrane proteins (LsrC and LsrD) and a solute-binding protein (LsrB).

The protein resides in the cell inner membrane. Functionally, part of the ABC transporter complex LsrABCD involved in autoinducer 2 (AI-2) import. Probably responsible for the translocation of the substrate across the membrane. This Escherichia coli O157:H7 protein is Autoinducer 2 import system permease protein LsrC (lsrC).